A 152-amino-acid polypeptide reads, in one-letter code: Endoribonuclease YbeY (152 aa).

Residues histidine 118, histidine 122, and histidine 128 each contribute to the Zn(2+) site.

The protein belongs to the endoribonuclease YbeY family. It depends on Zn(2+) as a cofactor.

The protein localises to the cytoplasm. Its function is as follows. Single strand-specific metallo-endoribonuclease involved in late-stage 70S ribosome quality control and in maturation of the 3' terminus of the 16S rRNA. The sequence is that of Endoribonuclease YbeY from Lacticaseibacillus paracasei (strain ATCC 334 / BCRC 17002 / CCUG 31169 / CIP 107868 / KCTC 3260 / NRRL B-441) (Lactobacillus paracasei).